Here is a 258-residue protein sequence, read N- to C-terminus: Imidazole glycerol phosphate synthase subunit HisF (258 aa).

Catalysis depends on residues aspartate 11 and aspartate 130.

It belongs to the HisA/HisF family. Heterodimer of HisH and HisF.

The protein localises to the cytoplasm. The catalysed reaction is 5-[(5-phospho-1-deoxy-D-ribulos-1-ylimino)methylamino]-1-(5-phospho-beta-D-ribosyl)imidazole-4-carboxamide + L-glutamine = D-erythro-1-(imidazol-4-yl)glycerol 3-phosphate + 5-amino-1-(5-phospho-beta-D-ribosyl)imidazole-4-carboxamide + L-glutamate + H(+). Its pathway is amino-acid biosynthesis; L-histidine biosynthesis; L-histidine from 5-phospho-alpha-D-ribose 1-diphosphate: step 5/9. Functionally, IGPS catalyzes the conversion of PRFAR and glutamine to IGP, AICAR and glutamate. The HisF subunit catalyzes the cyclization activity that produces IGP and AICAR from PRFAR using the ammonia provided by the HisH subunit. The polypeptide is Imidazole glycerol phosphate synthase subunit HisF (Sodalis glossinidius (strain morsitans)).